The sequence spans 348 residues: Sensor protein VraS (348 aa).

2 helical membrane-spanning segments follow: residues 13 to 33 (ILVY…VNII) and 43 to 63 (IFGI…CIIV). Positions 150–341 (RLARELHDSV…RIEVKAPLNR (192 aa)) constitute a Histidine kinase domain.

The protein resides in the cell membrane. It carries out the reaction ATP + protein L-histidine = ADP + protein N-phospho-L-histidine.. Member of the two-component regulatory system VraS/VraR involved in the control of the cell wall peptidoglycan biosynthesis. Probably activates VraR by phosphorylation. In Staphylococcus haemolyticus (strain JCSC1435), this protein is Sensor protein VraS (vraS).